The sequence spans 336 residues: F420-dependent glucose-6-phosphate dehydrogenase (336 aa).

Coenzyme F420-(gamma-Glu)n is bound at residue Asp-40. The Proton donor role is filled by His-41. Coenzyme F420-(gamma-Glu)n-binding positions include Thr-77 and 108-109 (TG). Glu-110 (proton acceptor) is an active-site residue. Coenzyme F420-(gamma-Glu)n-binding positions include Asn-113, 176-177 (SG), and 179-180 (AA). Substrate contacts are provided by Thr-194, Lys-197, Lys-258, and Arg-282.

Belongs to the F420-dependent glucose-6-phosphate dehydrogenase family. Homodimer.

The enzyme catalyses oxidized coenzyme F420-(gamma-L-Glu)(n) + D-glucose 6-phosphate + H(+) = 6-phospho-D-glucono-1,5-lactone + reduced coenzyme F420-(gamma-L-Glu)(n). In terms of biological role, catalyzes the coenzyme F420-dependent oxidation of glucose 6-phosphate (G6P) to 6-phosphogluconolactone. This Microbacterium testaceum (strain StLB037) protein is F420-dependent glucose-6-phosphate dehydrogenase.